Reading from the N-terminus, the 198-residue chain is Recombination protein RecR (198 aa).

The C4-type zinc-finger motif lies at 57–72 (CSVCGNITDEDPCEIC). The Toprim domain maps to 80 to 175 (EMILVVEQPK…KVTRLAHGLA (96 aa)).

The protein belongs to the RecR family.

May play a role in DNA repair. It seems to be involved in an RecBC-independent recombinational process of DNA repair. It may act with RecF and RecO. The chain is Recombination protein RecR from Latilactobacillus sakei subsp. sakei (strain 23K) (Lactobacillus sakei subsp. sakei).